Here is a 235-residue protein sequence, read N- to C-terminus: Carboxy-S-adenosyl-L-methionine synthase (235 aa).

S-adenosyl-L-methionine-binding positions include tyrosine 35, 60–62, 83–84, asparagine 124, and arginine 191; these read GCS and DN.

It belongs to the class I-like SAM-binding methyltransferase superfamily. Cx-SAM synthase family. Homodimer.

The catalysed reaction is prephenate + S-adenosyl-L-methionine = carboxy-S-adenosyl-L-methionine + 3-phenylpyruvate + H2O. Catalyzes the conversion of S-adenosyl-L-methionine (SAM) to carboxy-S-adenosyl-L-methionine (Cx-SAM). The polypeptide is Carboxy-S-adenosyl-L-methionine synthase (Campylobacter jejuni subsp. jejuni serotype O:23/36 (strain 81-176)).